The sequence spans 145 residues: Photosystem I reaction center subunit VI-2, chloroplastic (145 aa).

Residues methionine 1–alanine 50 constitute a chloroplast transit peptide. Residues leucine 102–valine 118 traverse the membrane as a helical segment. A disordered region spans residues valine 126–leucine 145.

It belongs to the psaH family.

The protein resides in the plastid. It localises to the chloroplast thylakoid membrane. In terms of biological role, possible role could be the docking of the LHC I antenna complex to the core complex. The sequence is that of Photosystem I reaction center subunit VI-2, chloroplastic (PSAH2) from Arabidopsis thaliana (Mouse-ear cress).